Consider the following 144-residue polypeptide: MRLNTLSPAAGSKHAPKRVGRGIGSGLGKTGGRGHKGQKSRSGGKVRPGFEGGQMPLKQRLPKFGFTSRKSLVSAEVRVAELAKVTGDVVDLNSLKAANVITKNIENVKIVLSGEINKAVTVKGLRVTKGAKAAIEAAGGKIEE.

A disordered region spans residues 1-57 (MRLNTLSPAAGSKHAPKRVGRGIGSGLGKTGGRGHKGQKSRSGGKVRPGFEGGQMPL). A compositionally biased stretch (gly residues) spans 21–31 (RGIGSGLGKTG). Positions 32 to 44 (GRGHKGQKSRSGG) are enriched in basic residues.

Belongs to the universal ribosomal protein uL15 family. Part of the 50S ribosomal subunit.

Its function is as follows. Binds to the 23S rRNA. The polypeptide is Large ribosomal subunit protein uL15 (Vibrio vulnificus (strain CMCP6)).